The following is a 160-amino-acid chain: ATP synthase subunit b (160 aa).

The helical transmembrane segment at 15–35 (LAIVIGVLFWFLRGFLGGILE) threads the bilayer.

Belongs to the ATPase B chain family. As to quaternary structure, F-type ATPases have 2 components, F(1) - the catalytic core - and F(0) - the membrane proton channel. F(1) has five subunits: alpha(3), beta(3), gamma(1), delta(1), epsilon(1). F(0) has four main subunits: a(1), b(1), b'(1) and c(10-14). The alpha and beta chains form an alternating ring which encloses part of the gamma chain. F(1) is attached to F(0) by a central stalk formed by the gamma and epsilon chains, while a peripheral stalk is formed by the delta, b and b' chains.

It is found in the cellular thylakoid membrane. In terms of biological role, f(1)F(0) ATP synthase produces ATP from ADP in the presence of a proton or sodium gradient. F-type ATPases consist of two structural domains, F(1) containing the extramembraneous catalytic core and F(0) containing the membrane proton channel, linked together by a central stalk and a peripheral stalk. During catalysis, ATP synthesis in the catalytic domain of F(1) is coupled via a rotary mechanism of the central stalk subunits to proton translocation. Functionally, component of the F(0) channel, it forms part of the peripheral stalk, linking F(1) to F(0). This chain is ATP synthase subunit b, found in Synechococcus sp. (strain CC9902).